An 886-amino-acid chain; its full sequence is Methanogenesis regulatory histidine kinase FilI (886 aa).

2 helical membrane passes run 7–27 (ILAFTGGMILVLALICSTFMC) and 270–290 (VVGIFLASLLFGGLILLFLEL). The HAMP domain occupies 290–344 (LSILMPLATITSSVEAIREQEKGQGSRIPTVGPAELATLAESINEMLDHLESYNQ). Positions 349-419 (SEKRFRTIVD…EKDAGVLSGE (71 aa)) constitute a PAS domain. Positions 421 to 473 (FVGEVSAHTRAGSSMTFHAVKVPLRDDRGQVTGICGIARDITDIKEAGVELLK) constitute a PAC domain. A Histidine kinase domain is found at 674 to 886 (TVSHDLRSPL…TCVLFTLPTP (213 aa)). His677 carries the post-translational modification Phosphohistidine; by autocatalysis.

Post-translationally, autophosphorylated.

Its subcellular location is the cell membrane. It catalyses the reaction ATP + protein L-histidine = ADP + protein N-phospho-L-histidine.. In terms of biological role, member of the two-component regulatory system FilI/FilRs, which is involved in the regulation of methanogenesis. Autophosphorylates and specifically transfers the phosphoryl group to both FilR1 and FilR2. Its function is as follows. Could also catalyze the synthesis of the quorum sensing (QS) signal molecules carboxyl-acyl homoserine lactones (AHLs), which regulate the transition of the cellular morphology from short cells to filaments and of the carbon metabolic flux from biomass formation to methane production. The chain is Methanogenesis regulatory histidine kinase FilI from Methanothrix harundinacea (strain 6Ac) (Methanosaeta harundinacea).